A 225-amino-acid polypeptide reads, in one-letter code: Small ribosomal subunit protein uS5 (225 aa).

One can recognise an S5 DRBM domain in the interval Leu57–Val120.

This sequence belongs to the universal ribosomal protein uS5 family. Part of the 30S ribosomal subunit. Contacts protein S4.

With S4 and S12 plays an important role in translational accuracy. The protein is Small ribosomal subunit protein uS5 of Methanococcus vannielii (strain ATCC 35089 / DSM 1224 / JCM 13029 / OCM 148 / SB).